A 462-amino-acid polypeptide reads, in one-letter code: Elongation factor 1-alpha 1 (462 aa).

At Gly2 the chain carries N,N,N-trimethylglycine. One can recognise a tr-type G domain in the interval 5–242 (KTHINIVVIG…DCILPPTRPT (238 aa)). A G1 region spans residues 14–21 (GHVDSGKS). 14 to 21 (GHVDSGKS) is a binding site for GTP. Lys36 is subject to N6,N6,N6-trimethyllysine; alternate. Lys36 is subject to N6,N6-dimethyllysine; alternate. Residue Lys36 is modified to N6-methyllysine; alternate. Lys55 is subject to N6,N6-dimethyllysine. A G2 region spans residues 70-74 (GITID). The residue at position 79 (Lys79) is an N6,N6,N6-trimethyllysine; by EEF1AKMT1. The tract at residues 91–94 (DAPG) is G3. Residue 153–156 (NKMD) participates in GTP binding. Positions 153–156 (NKMD) are G4. N6,N6,N6-trimethyllysine; alternate; by EEF1AKMT3 is present on Lys165. N6,N6-dimethyllysine; alternate; by EEF1AKMT3 is present on Lys165. N6-acetyllysine; alternate is present on Lys165. N6-methyllysine; alternate; by EEF1AKMT3 is present on Lys165. At Lys172 the chain carries N6-acetyllysine. 194-196 (SGW) serves as a coordination point for GTP. The tract at residues 194-196 (SGW) is G5. Lys273 bears the N6-acetyllysine mark. A Phosphoserine; by TGFBR1 modification is found at Ser300. Residue Glu301 is modified to 5-glutamyl glycerylphosphorylethanolamine. N6,N6,N6-trimethyllysine; by EEF1AKMT2 is present on Lys318. Glu374 carries the post-translational modification 5-glutamyl glycerylphosphorylethanolamine. A Glycyl lysine isopeptide (Lys-Gly) (interchain with G-Cter in ubiquitin) cross-link involves residue Lys385. N6-acetyllysine; alternate is present on Lys392. Lys392 is modified (N6-succinyllysine; alternate). Residue Thr432 is modified to Phosphothreonine; by PASK. An N6-acetyllysine modification is found at Lys439.

Belongs to the TRAFAC class translation factor GTPase superfamily. Classic translation factor GTPase family. EF-Tu/EF-1A subfamily. As to quaternary structure, found in a nuclear export complex with XPO5, EEF1A1, Ran and aminoacylated tRNA. Interacts with PARP1 and TXK. Interacts with KARS1. May interact with ERGIC2. Interacts with IFIT1 (via TPR repeats 4-7). Interacts with DLC1, facilitating distribution to the membrane periphery and ruffles upon growth factor stimulation. Interacts with ZPR1; the interaction occurs in a epidermal growth factor (EGF)-dependent manner. Interacts with PPP1R16B. Interacts with SPHK1 and SPHK2; both interactions increase SPHK1 and SPHK2 kinase activity. Interacts with guanyl-nucleotide exchange factor EEF1B2. Interacts (via middle-region) with HTATIP2 (via N-terminus); the interaction is direct and competes with EEF1A1 binding to guanyl-nucleotide exchange factor EEF1B2, thereby inhibiting GDP for GTP exchange and reactivation of EEF1A1. Interacts with tRNA. Post-translationally, ISGylated. In terms of processing, phosphorylated by TXK. Phosphorylation by PASK increases translation efficiency. Phosphorylated by ROCK2. Phosphorylation by TGFBR1 inhibits translation elongation. Trimethylated at Lys-79 by EEF1AKMT1. Methylated at Lys-165 by EEF1AKMT3, methylation by EEF1AKMT3 is dynamic as well as inducible by stress conditions, such as ER-stress, and plays a regulatory role on mRNA translation. Trimethylated at Lys-318 by EEF1AKMT2. Mono-, di-, and trimethylated at Lys-36 by EEF1AKMT4; trimethylated form is predominant. Methylation by EEF1AKMT4 contributes to the fine-tuning of translation rates for a subset of tRNAs. Trimethylated at Gly-2 by METTL13. Mono- and dimethylated at Lys-55 by METTL13; dimethylated form is predominant. Post-translationally, ubiquitinated at Lys-385 by RNF14 in response to ribosome collisions (ribosome stalling), leading to its degradation by the proteasome and rescue of stalled ribosomes.

It is found in the cytoplasm. Its subcellular location is the nucleus. The protein resides in the nucleolus. The protein localises to the cell membrane. The catalysed reaction is GTP + H2O = GDP + phosphate + H(+). Its function is as follows. Translation elongation factor that catalyzes the GTP-dependent binding of aminoacyl-tRNA (aa-tRNA) to the A-site of ribosomes during the elongation phase of protein synthesis. Base pairing between the mRNA codon and the aa-tRNA anticodon promotes GTP hydrolysis, releasing the aa-tRNA from EEF1A1 and allowing its accommodation into the ribosome. The growing protein chain is subsequently transferred from the P-site peptidyl tRNA to the A-site aa-tRNA, extending it by one amino acid through ribosome-catalyzed peptide bond formation. Also plays a role in the positive regulation of IFNG transcription in T-helper 1 cells as part of an IFNG promoter-binding complex with TXK and PARP1. Also plays a role in cytoskeleton organization by promoting actin bundling. The sequence is that of Elongation factor 1-alpha 1 (EEF1A1) from Equus caballus (Horse).